We begin with the raw amino-acid sequence, 97 residues long: Large ribosomal subunit protein eL37 (97 aa).

Residue K10 is modified to N6-acetyllysine. Zn(2+) is bound by residues C19, C22, C34, and C37. The C4-type zinc-finger motif lies at C19–C37. Residues S96 and S97 each carry the phosphoserine modification.

The protein belongs to the eukaryotic ribosomal protein eL37 family. Component of the large ribosomal subunit.

The protein resides in the cytoplasm. Functionally, component of the large ribosomal subunit. The ribosome is a large ribonucleoprotein complex responsible for the synthesis of proteins in the cell. The sequence is that of Large ribosomal subunit protein eL37 (RPL37) from Bos taurus (Bovine).